The chain runs to 637 residues: Probable serine/threonine-protein kinase DDB_G0283065 (637 aa).

2 disordered regions span residues 36–88 (NNNN…KFNR) and 155–234 (NSNN…RFNN). The segment covering 53 to 85 (NNSTTKSIDNNNNNTNNSNSNNNNNDNIKNNNK) has biased composition (low complexity). The 394-residue stretch at 236–629 (FNDVRVLGKG…NQISTDYDNF (394 aa)) folds into the Protein kinase domain. ATP-binding positions include 242-250 (LGKGGFGIV) and lysine 265. Aspartate 479 acts as the Proton acceptor in catalysis.

Belongs to the protein kinase superfamily. Ser/Thr protein kinase family. GCN2 subfamily.

It carries out the reaction L-seryl-[protein] + ATP = O-phospho-L-seryl-[protein] + ADP + H(+). It catalyses the reaction L-threonyl-[protein] + ATP = O-phospho-L-threonyl-[protein] + ADP + H(+). The protein is Probable serine/threonine-protein kinase DDB_G0283065 of Dictyostelium discoideum (Social amoeba).